Reading from the N-terminus, the 836-residue chain is MSDVDMESGSDDSGMEDLDEEIQKIKQKMIDDSQSVVLANQLLILLRKNGDFDELDIKRRQFVEWAPLNPLNWKNWIEDFQNRKPEPSVAEVEEMFEKALFDENDVTIWVERAMYAYKVANDKNKKEDFKFCRDVCSKALENLGTRYDSGGHIWLIFLEYEMSYLKNSMNAPDYQRLADQVFALFERALHCPTDQLEDVYVLAEQFCTEFKQHHKLEELKKTYNSTMRQKEQLSKFEELIQQEETKKQGLKQFFDHEKKSGIPSRIKMAHERLVSELDDDEEAWIAYGAWADIELKLPQVAVKVYSRALRHCPYSFVLHQQALLAFERDRRPNEEIDALWERARSNVINSAEEGRSLYRTYAFLLRRRIHLTGSSDYSPMAEVFDEGAALLREWFSMAWDTTADYRQMQAYFYASLMKNMDKCRNIWNDILASGFGRFAGKWIEAVRLERQFGDKENARKYLNKALNSVSDNINEIYMYYVQFEREEGTLAELDLVLEKVNSQVAHRAIRPQKKVSEKPAPAPKSKQDHIQKRTSGGEPIVKKVKGDDGGFKAPLPPSNAKSSSAVSSSNASSTPAPGSFAVQKAAPGTEDARTIFVSNLDFTTTEDEIRQAIEGVASIRFARKANSDLVHRGFAYVVMENDQKAQQALLKDRVPVKGRPMFISANDPEKRVGFKFSTTLEKSKVFVRNVHFQATDDELKALFSKFGTVTSVRRVTHKDGKPKGIAFVDFDTEASAQKCVASGDKLMLRERELEVALSNPPVKKDKSHGKPAAIGASLEEDGPRKGHAAKLQLVPRAITNKTPQITARLDAMDVSEGTSTSQPLSNDQFRKMFMKN.

5 HAT repeats span residues 127–163 (EDFK…YEMS), 296–329 (KLPQ…FERD), 331–367 (RPNE…LLRR), 418–451 (KNMD…LERQ), and 453–486 (GDKE…FERE). The disordered stretch occupies residues 507–585 (RAIRPQKKVS…APGSFAVQKA (79 aa)). Basic and acidic residues predominate over residues 540-550 (IVKKVKGDDGG). Positions 558–579 (SNAKSSSAVSSSNASSTPAPGS) are enriched in low complexity. RRM domains are found at residues 593–668 (RTIF…ANDP) and 683–760 (SKVF…LSNP). 2 disordered regions span residues 757–786 (LSNP…PRKG) and 811–830 (AMDV…DQFR). Polar residues predominate over residues 816-827 (EGTSTSQPLSND).

Forms a complex composed of sart-3, terminal uridylyltransferase usip-1 and U6 snRNA; complex formation is mediated by usip-1 and sart-3 binding to U6 snRNA. Associates with U4 and U6 snRNP complexes, probably by interacting with U4 and U6 snRNAs. As to expression, ubiquitously expressed.

It is found in the nucleus. The protein resides in the nucleoplasm. Functionally, U6 snRNP-binding protein that functions as a recycling factor of the splicing machinery. Promotes the initial reassembly of U4 and U6 snRNPs following their ejection from the spliceosome during its maturation. The polypeptide is Spliceosome associated factor 3, U4/U6 recycling protein (Caenorhabditis elegans).